The following is a 374-amino-acid chain: MSVPAFIDISEEDQAAELRAYLKSKGAEISEENSEGGLHVDLAQIIEACDVCLKEDDKDVESVMNSVVSLLLILEPDKQEALIESLCEKLVKFREGERPSLRLQLLSNLFHGMDKNTPVRYTVYCSLIKVAASCGAIQYIPTELDQVRKWISDWNLTTEKKHTLLRLLYEALVDCKKSDAASKVMVELLGSYTEDNASQARVDAHRCIVRALKDPNAFLFDHLLTLKPVKFLEGELIHDLLTIFVSAKLASYVKFYQNNKDFIDSLGLLHEQNMAKMRLLTFMGMAVENKEISFDTMQQELQIGADDVEAFVIDAVRTKMVYCKIDQTQRKVVVSHSTHRTFGKQQWQQLYDTLNAWKQNLNKVKNSLLSLSDT.

Ser2 carries the post-translational modification N-acetylserine. Phosphoserine is present on residues Ser2 and Ser152. Positions 180-339 constitute a PCI domain; that stretch reads AASKVMVELL…RKVVVSHSTH (160 aa). Lys254 carries the N6-acetyllysine modification. The interaction with HSV-1 and HSV-2 stretch occupies residues 344–374; sequence KQQWQQLYDTLNAWKQNLNKVKNSLLSLSDT. Ser367 carries the post-translational modification Phosphoserine.

Component of the eukaryotic translation initiation factor 3 (eIF-3) complex, which is composed of 13 subunits: EIF3A, EIF3B, EIF3C, EIF3D, EIF3E, EIF3F, EIF3G, EIF3H, EIF3I, EIF3J, EIF3K, EIF3L and EIF3M. The eIF-3 complex appears to include 3 stable modules: module A is composed of EIF3A, EIF3B, EIF3G and EIF3I; module B is composed of EIF3F, EIF3H, and EIF3M; and module C is composed of EIF3C, EIF3D, EIF3E, EIF3K and EIF3L. EIF3C of module C binds EIF3B of module A and EIF3H of module B, thereby linking the three modules. EIF3J is a labile subunit that binds to the eIF-3 complex via EIF3B. The eIF-3 complex interacts with RPS6KB1 under conditions of nutrient depletion. Mitogenic stimulation leads to binding and activation of a complex composed of MTOR and RPTOR, leading to phosphorylation and release of RPS6KB1 and binding of EIF4B to eIF-3. Broadly expressed.

The protein resides in the cytoplasm. In terms of biological role, component of the eukaryotic translation initiation factor 3 (eIF-3) complex, which is required for several steps in the initiation of protein synthesis. The eIF-3 complex associates with the 40S ribosome and facilitates the recruitment of eIF-1, eIF-1A, eIF-2:GTP:methionyl-tRNAi and eIF-5 to form the 43S pre-initiation complex (43S PIC). The eIF-3 complex stimulates mRNA recruitment to the 43S PIC and scanning of the mRNA for AUG recognition. The eIF-3 complex is also required for disassembly and recycling of post-termination ribosomal complexes and subsequently prevents premature joining of the 40S and 60S ribosomal subunits prior to initiation. The eIF-3 complex specifically targets and initiates translation of a subset of mRNAs involved in cell proliferation, including cell cycling, differentiation and apoptosis, and uses different modes of RNA stem-loop binding to exert either translational activation or repression. Its function is as follows. (Microbial infection) May favor virus entry in case of infection with herpes simplex virus 1 (HSV1) or herpes simplex virus 2 (HSV2). In Homo sapiens (Human), this protein is Eukaryotic translation initiation factor 3 subunit M.